The chain runs to 575 residues: Proline--tRNA ligase (575 aa).

It belongs to the class-II aminoacyl-tRNA synthetase family. ProS type 1 subfamily. Homodimer.

The protein localises to the cytoplasm. The catalysed reaction is tRNA(Pro) + L-proline + ATP = L-prolyl-tRNA(Pro) + AMP + diphosphate. Its function is as follows. Catalyzes the attachment of proline to tRNA(Pro) in a two-step reaction: proline is first activated by ATP to form Pro-AMP and then transferred to the acceptor end of tRNA(Pro). As ProRS can inadvertently accommodate and process non-cognate amino acids such as alanine and cysteine, to avoid such errors it has two additional distinct editing activities against alanine. One activity is designated as 'pretransfer' editing and involves the tRNA(Pro)-independent hydrolysis of activated Ala-AMP. The other activity is designated 'posttransfer' editing and involves deacylation of mischarged Ala-tRNA(Pro). The misacylated Cys-tRNA(Pro) is not edited by ProRS. This chain is Proline--tRNA ligase, found in Anaeromyxobacter sp. (strain Fw109-5).